Consider the following 542-residue polypeptide: CTP synthase (542 aa).

The interval 1 to 265 is amidoligase domain; sequence MTRFIFITGG…DTQVLKFFGM (265 aa). CTP is bound at residue S13. UTP is bound at residue S13. Residue 14-19 participates in ATP binding; that stretch reads SLGKGL. Residue Y54 coordinates L-glutamine. D71 is a binding site for ATP. Mg(2+) is bound by residues D71 and E139. Residues 146 to 148, 186 to 191, and K222 each bind CTP; these read DIE and KTKPTQ. Residues 186-191 and K222 each bind UTP; that span reads KTKPTQ. The Glutamine amidotransferase type-1 domain occupies 291–541; it reads TIAVVGKYTS…IRAAIEQSRL (251 aa). G353 is a binding site for L-glutamine. C380 acts as the Nucleophile; for glutamine hydrolysis in catalysis. L-glutamine is bound by residues 381-384, E404, and R469; that span reads FGMQ. Residues H514 and E516 contribute to the active site.

It belongs to the CTP synthase family. In terms of assembly, homotetramer.

The catalysed reaction is UTP + L-glutamine + ATP + H2O = CTP + L-glutamate + ADP + phosphate + 2 H(+). It catalyses the reaction L-glutamine + H2O = L-glutamate + NH4(+). It carries out the reaction UTP + NH4(+) + ATP = CTP + ADP + phosphate + 2 H(+). Its pathway is pyrimidine metabolism; CTP biosynthesis via de novo pathway; CTP from UDP: step 2/2. Allosterically activated by GTP, when glutamine is the substrate; GTP has no effect on the reaction when ammonia is the substrate. The allosteric effector GTP functions by stabilizing the protein conformation that binds the tetrahedral intermediate(s) formed during glutamine hydrolysis. Inhibited by the product CTP, via allosteric rather than competitive inhibition. Functionally, catalyzes the ATP-dependent amination of UTP to CTP with either L-glutamine or ammonia as the source of nitrogen. Regulates intracellular CTP levels through interactions with the four ribonucleotide triphosphates. The sequence is that of CTP synthase from Rhodospirillum centenum (strain ATCC 51521 / SW).